A 363-amino-acid chain; its full sequence is UDP-N-acetylglucosamine--N-acetylmuramyl-(pentapeptide) pyrophosphoryl-undecaprenol N-acetylglucosamine transferase (363 aa).

UDP-N-acetyl-alpha-D-glucosamine contacts are provided by residues 10–12 (TGG), Asn-124, Ser-195, Ile-248, and Gln-293.

Belongs to the glycosyltransferase 28 family. MurG subfamily.

The protein localises to the cell membrane. The catalysed reaction is Mur2Ac(oyl-L-Ala-gamma-D-Glu-L-Lys-D-Ala-D-Ala)-di-trans,octa-cis-undecaprenyl diphosphate + UDP-N-acetyl-alpha-D-glucosamine = beta-D-GlcNAc-(1-&gt;4)-Mur2Ac(oyl-L-Ala-gamma-D-Glu-L-Lys-D-Ala-D-Ala)-di-trans,octa-cis-undecaprenyl diphosphate + UDP + H(+). It functions in the pathway cell wall biogenesis; peptidoglycan biosynthesis. Cell wall formation. Catalyzes the transfer of a GlcNAc subunit on undecaprenyl-pyrophosphoryl-MurNAc-pentapeptide (lipid intermediate I) to form undecaprenyl-pyrophosphoryl-MurNAc-(pentapeptide)GlcNAc (lipid intermediate II). The sequence is that of UDP-N-acetylglucosamine--N-acetylmuramyl-(pentapeptide) pyrophosphoryl-undecaprenol N-acetylglucosamine transferase from Lacticaseibacillus casei (strain BL23) (Lactobacillus casei).